The sequence spans 390 residues: Heparan sulfate glucosamine 3-O-sulfotransferase 3B1 (390 aa).

A disordered region spans residues 1–25 (MGQRLSGGRSCLDVPGRFLPQPPPP). At 1–32 (MGQRLSGGRSCLDVPGRFLPQPPPPPPPVRRK) the chain is on the cytoplasmic side. A helical; Signal-anchor for type II membrane protein membrane pass occupies residues 33 to 53 (LALLFAMLCIWLYMFLYSCAG). Residues 54–390 (SCTAAPGLLL…QMTGRDFGWD (337 aa)) lie on the Lumenal side of the membrane. The segment at 79-125 (TAPNETSPKMPFRAPPANSLAAGKDKTVGAGSQEEQSPEAPDSPSPI) is disordered. Residue Asn-82 is glycosylated (N-linked (GlcNAc...) asparagine). Residue 147–151 (KGGTR) participates in 3'-phosphoadenylyl sulfate binding. Residues 169–175 (EPHFFDR) and 200–203 (KTPS) contribute to the substrate site. 3'-phosphoadenylyl sulfate-binding residues include Arg-228 and Ser-236. Asn-258 carries an N-linked (GlcNAc...) asparagine glycan. 268–269 (WS) lines the substrate pocket. The N-linked (GlcNAc...) asparagine glycan is linked to Asn-329. An intrachain disulfide couples Cys-336 to Cys-348. 353–357 (KGRAH) is a binding site for 3'-phosphoadenylyl sulfate.

The protein belongs to the sulfotransferase 1 family.

The protein localises to the golgi apparatus membrane. The catalysed reaction is alpha-D-glucosaminyl-[heparan sulfate](n) + 3'-phosphoadenylyl sulfate = 3-sulfo-alpha-D-glucosaminyl-[heparan sulfate](n) + adenosine 3',5'-bisphosphate + H(+). Sulfotransferase that utilizes 3'-phospho-5'-adenylyl sulfate (PAPS) to catalyze the transfer of a sulfo group to an N-unsubstituted glucosamine linked to a 2-O-sulfo iduronic acid unit on heparan sulfate. Catalyzes the O-sulfation of glucosamine in IdoUA2S-GlcNS and also in IdoUA2S-GlcNH2. Unlike HS3ST1/3-OST-1, does not convert non-anticoagulant heparan sulfate to anticoagulant heparan sulfate. The chain is Heparan sulfate glucosamine 3-O-sulfotransferase 3B1 (Hs3st3b1) from Mus musculus (Mouse).